The primary structure comprises 1032 residues: Connector enhancer of kinase suppressor of ras 2 (1032 aa).

The 66-residue stretch at 11 to 76 (WSPSQVVDWM…LEAVDLLCAL (66 aa)) folds into the SAM domain. Ser12 carries the phosphoserine modification. The region spanning 84–178 (NLKTLSHKLN…TIVQQDCTVY (95 aa)) is the CRIC domain. The PDZ domain maps to 215 to 297 (VIQLANIKPS…GVILTLKKRP (83 aa)). A compositionally biased stretch (low complexity) spans 324–340 (RSPTSSVATPSSTISTP). Residues 324–349 (RSPTSSVATPSSTISTPTKRDSSALQ) form a disordered region. Residues 332 to 515 (TPSSTISTPT…PTHYSLLPSL (184 aa)) enclose the DUF1170 domain. Residues Ser338 and Ser390 each carry the phosphoserine modification. The interval 480–509 (EEYMFQRNSKKDTGKKSKKKGDKSTSPTHY) is disordered. One can recognise a PH domain in the interval 570-669 (RGDCEGWLWK…WLNRINMLTA (100 aa)). The disordered stretch occupies residues 682–766 (DYWSESDKEE…PIRKTASQRR (85 aa)). A Phosphotyrosine modification is found at Tyr683. A compositionally biased stretch (acidic residues) spans 683–693 (YWSESDKEEAD). Phosphoserine is present on residues Ser685 and Ser687. Residues 701–714 (DSPPPPYDTYPRPP) show a composition bias toward pro residues. A compositionally biased stretch (low complexity) spans 730–740 (LSSTETSQSQS). 2 positions are modified to phosphoserine: Ser756 and Ser767. The tract at residues 866 to 900 (DPQDDIQPPEVEEEEEEEEEEAAGENIGEKNENRE) is disordered. Positions 874–917 (PEVEEEEEEEEEEAAGENIGEKNENREEKLGDSLQDLYRALEEA) form a coiled coil. Positions 875-888 (EVEEEEEEEEEEAA) are enriched in acidic residues. The residue at position 906 (Ser906) is a Phosphoserine.

This sequence belongs to the CNKSR family. Interacts with RAF1, RAB2L and RAL GTPase proteins. Interacts with DLG4 and AIP1. In terms of processing, phosphorylated on tyrosine. Expressed in neurons and localized in the cell body and neurites.

The protein localises to the cytoplasm. It localises to the membrane. In terms of biological role, may function as an adapter protein or regulator of Ras signaling pathways, in synaptic junctions. The chain is Connector enhancer of kinase suppressor of ras 2 (Cnksr2) from Rattus norvegicus (Rat).